Consider the following 260-residue polypeptide: MALRRPMVAGNWKMNGSAQLALELFNKFATKLQDDSAEVVLCPPSIYLESVRQQLDANKDALNGCLVRMGAQNLSQHDFGAYTGEVSGQMLKDSGCRYVIIGHSERRRMYGETSDIVAEKFAAAQKHGLTPILCVGESGPAREARRTFEVIAEELDVVIEKNGTMAFDNAIIAYEPLWAVGTGKSATPEQAQEVHAFIRKRLSEVSPYIGENIRILYGGSVTPSNAADLFAQPDVDGGLIGGVSLNSTEFLSLCSIAMSA.

11–13 (NWK) contributes to the substrate binding site. Catalysis depends on His-103, which acts as the Electrophile. Glu-175 serves as the catalytic Proton acceptor. Substrate-binding positions include Gly-181, Ser-220, and 241-242 (GG).

It belongs to the triosephosphate isomerase family. In terms of assembly, homodimer.

Its subcellular location is the cytoplasm. It carries out the reaction D-glyceraldehyde 3-phosphate = dihydroxyacetone phosphate. The protein operates within carbohydrate biosynthesis; gluconeogenesis. It functions in the pathway carbohydrate degradation; glycolysis; D-glyceraldehyde 3-phosphate from glycerone phosphate: step 1/1. Involved in the gluconeogenesis. Catalyzes stereospecifically the conversion of dihydroxyacetone phosphate (DHAP) to D-glyceraldehyde-3-phosphate (G3P). The chain is Triosephosphate isomerase from Shewanella sediminis (strain HAW-EB3).